Consider the following 341-residue polypeptide: 33 kDa chaperonin (341 aa).

2 disulfides stabilise this stretch: C245–C247 and C278–C281.

Belongs to the HSP33 family. In terms of processing, under oxidizing conditions two disulfide bonds are formed involving the reactive cysteines. Under reducing conditions zinc is bound to the reactive cysteines and the protein is inactive.

Its subcellular location is the cytoplasm. Redox regulated molecular chaperone. Protects both thermally unfolding and oxidatively damaged proteins from irreversible aggregation. Plays an important role in the bacterial defense system toward oxidative stress. This chain is 33 kDa chaperonin, found in Thermus thermophilus (strain ATCC 27634 / DSM 579 / HB8).